The primary structure comprises 146 residues: VHWTAEEKQLITQVWGKIDVAQIGGETLACLLVVYPWTQRFFPDFGNLSNAAAICGNAKVKAHGKKVLTSFGDAVKNLDNIKDTFAKLSELHCDKLHVDPVNFRLLGNVMITRLAAHFGKDFTPACHAAFQKLTGAVAHALARRYH.

Residues 2–146 enclose the Globin domain; the sequence is HWTAEEKQLI…VAHALARRYH (145 aa). Positions 63 and 92 each coordinate heme b.

The protein belongs to the globin family. As to quaternary structure, heterotetramer of two alpha chains and two beta chains. Red blood cells.

Its function is as follows. Involved in oxygen transport from the lung to the various peripheral tissues. The protein is Hemoglobin subunit beta-1 (HBB1) of Iguana iguana (Common iguana).